Consider the following 952-residue polypeptide: Eukaryotic initiation factor 4F subunit p150 (952 aa).

3 disordered regions span residues 1–77, 115–389, and 481–575; these read MTDE…NYNG, GSAP…DAGT, and VIPP…LVPS. Residues 7 to 16 show a composition bias toward polar residues; that stretch reads HPTQSASKQE. A compositionally biased stretch (low complexity) spans 29-46; that stretch reads ESQQQRGYTNYNNGSNYT. Over residues 47-56 the composition is skewed to polar residues; the sequence is QKKPYNSNRP. The segment covering 65–74 has biased composition (low complexity); the sequence is GPNRYNNRGN. The span at 140-151 shows a compositional bias: basic and acidic residues; that stretch reads SGEHLDLKEQHK. Positions 154 to 166 are enriched in polar residues; sequence LQSQERSTVSPQP. Residue serine 163 is modified to Phosphoserine. Positions 175 to 191 are enriched in low complexity; that stretch reads DSTSTSTPTPTPSTNDS. Phosphothreonine is present on threonine 181. Residues 188–299 form an interaction with PAB1 region; the sequence is TNDSKASSEE…KEESTPKVLT (112 aa). Serine 195 carries the phosphoserine modification. Residues 218–228 show a composition bias toward basic and acidic residues; sequence AALEKKRKEQL. A compositionally biased stretch (polar residues) spans 229-244; sequence EGSSGNNNIPMKTTPE. 3 stretches are compositionally biased toward basic and acidic residues: residues 246–276, 283–294, and 309–333; these read VEEKGSDKPEVTEKTKPAEEKSAEPEVKQET, QGEKGQIKEEST, and QQKEREEKTEGKENKEVPVQEETKS. Residues 355 to 368 are compositionally biased toward polar residues; the sequence is TEQSNIDESATTPA. At serine 503 the chain carries Phosphoserine. Composition is skewed to basic and acidic residues over residues 504-521 and 532-569; these read RGHDFRNTSVRNMDDRAN and RMNDDRRSNRSYTSRRDRERGSYRNEEKREDDKPKEEV. The region spanning 607 to 850 is the MIF4G domain; sequence ERKMKSLLNK…IDIKELRHDK (244 aa). A disordered region spans residues 870 to 952; it reads EEERQRQLKN…ALMGESDDEE (83 aa). Positions 879–894 are enriched in low complexity; that stretch reads NNSRSNSRRTNNSSNR. Position 883 is a phosphoserine (serine 883). Threonine 888 is modified (phosphothreonine). Serine 892, serine 896, serine 908, and serine 948 each carry phosphoserine. A compositionally biased stretch (polar residues) spans 908–922; sequence SFITTRTYSQRNSQR.

The protein belongs to the eukaryotic initiation factor 4G family. Component of the eIF4F complex, which composition varies with external and internal environmental conditions. It is composed of at least eIF4A (TIF1/TIF2), eIF4E (TIF45) and eIF4G (TIF4631 or TIF4632). Interacts with PAT1 in a RNA-dependent manner.

The protein resides in the cytoplasm. The protein localises to the P-body. It localises to the stress granule. Component of the eIF4F complex, which interacts with the mRNA cap structure and serves as an initial point of assembly for the translation apparatus. Stimulates translation by interaction with polyadenylate-binding protein PAB1, bringing the 5'- and 3'-ends of the mRNA in proximity. The formation of this circular mRNP structure appears to be critical for the synergistic effects of the cap and the poly(A) tail in facilitating translation initiation, recycling of ribosomes, and mRNA stability. TIF4631 is probably essential when TIF4632 is missing. The protein is Eukaryotic initiation factor 4F subunit p150 of Saccharomyces cerevisiae (strain ATCC 204508 / S288c) (Baker's yeast).